An 819-amino-acid chain; its full sequence is Protein EFR3 homolog A (819 aa).

The disordered stretch occupies residues 210 to 230 (DTDSRTGPPASPTTGDKEENP).

This sequence belongs to the EFR3 family. As to quaternary structure, component of a phosphatidylinositol 4-kinase (PI4K) complex. Palmitoylated at its N-terminus, anchoring the protein to the plasma membrane.

It localises to the cell membrane. In terms of biological role, component of a complex required to localize phosphatidylinositol 4-kinase (PI4K) to the plasma membrane. The complex acts as a regulator of phosphatidylinositol 4-phosphate (PtdIns(4)P) synthesis. In the complex, efr3a probably acts as the membrane-anchoring component. The chain is Protein EFR3 homolog A (efr3a) from Xenopus laevis (African clawed frog).